The primary structure comprises 213 residues: MNIFRITADLAHAVAIVILLLKIWKSRSCEGISGRSQILFAVTFFTRYLDLFTSFYSLYNTVMKVLFLAGSIGTVYLMWVKFKATYDRNNDTFRIEFLVIPSIILALIINHEFMFMEVMWTFSIYLEAVAIMPQLFMLSRTGNAETITAHYLFALGSYRFLYIFNWVYRYYTESFFDPIAVVAGIVQTVLYADFFYLYITRVIQSNRQFEMSA.

Residues 1 to 2 lie on the Lumenal side of the membrane; the sequence is MN. The chain crosses the membrane as a helical span at residues 3–21; sequence IFRITADLAHAVAIVILLL. Residues 22–35 are Cytoplasmic-facing; sequence KIWKSRSCEGISGR. Residues 36–53 traverse the membrane as a helical segment; the sequence is SQILFAVTFFTRYLDLFT. Over 54-61 the chain is Lumenal; the sequence is SFYSLYNT. Residues 62–80 traverse the membrane as a helical segment; it reads VMKVLFLAGSIGTVYLMWV. Topologically, residues 81 to 96 are cytoplasmic; the sequence is KFKATYDRNNDTFRIE. The chain crosses the membrane as a helical span at residues 97–110; it reads FLVIPSIILALIIN. The Lumenal segment spans residues 111–117; that stretch reads HEFMFME. A helical membrane pass occupies residues 118–137; that stretch reads VMWTFSIYLEAVAIMPQLFM. Residues 138 to 149 lie on the Cytoplasmic side of the membrane; that stretch reads LSRTGNAETITA. The helical transmembrane segment at 150–168 threads the bilayer; it reads HYLFALGSYRFLYIFNWVY. The Lumenal segment spans residues 169–178; the sequence is RYYTESFFDP. A helical membrane pass occupies residues 179–199; that stretch reads IAVVAGIVQTVLYADFFYLYI. Topologically, residues 200-213 are cytoplasmic; it reads TRVIQSNRQFEMSA.

The protein belongs to the ERD2 family.

Its subcellular location is the endoplasmic reticulum membrane. Functionally, required for the retention of luminal endoplasmic reticulum proteins. Determines the specificity of the luminal ER protein retention system. Also required for normal vesicular traffic through the Golgi. The sequence is that of ER lumen protein-retaining receptor (erd-2.1) from Caenorhabditis briggsae.